Consider the following 151-residue polypeptide: Deoxyuridine 5'-triphosphate nucleotidohydrolase (151 aa).

Residues Arg70–Gly72, Asn83, Leu87–Asp89, and Met97 contribute to the substrate site.

It belongs to the dUTPase family. Mg(2+) is required as a cofactor.

The enzyme catalyses dUTP + H2O = dUMP + diphosphate + H(+). It functions in the pathway pyrimidine metabolism; dUMP biosynthesis; dUMP from dCTP (dUTP route): step 2/2. Functionally, this enzyme is involved in nucleotide metabolism: it produces dUMP, the immediate precursor of thymidine nucleotides and it decreases the intracellular concentration of dUTP so that uracil cannot be incorporated into DNA. The polypeptide is Deoxyuridine 5'-triphosphate nucleotidohydrolase (Pasteurella multocida (strain Pm70)).